The chain runs to 97 residues: Putative pterin-4-alpha-carbinolamine dehydratase (97 aa).

This sequence belongs to the pterin-4-alpha-carbinolamine dehydratase family.

It catalyses the reaction (4aS,6R)-4a-hydroxy-L-erythro-5,6,7,8-tetrahydrobiopterin = (6R)-L-erythro-6,7-dihydrobiopterin + H2O. This chain is Putative pterin-4-alpha-carbinolamine dehydratase, found in Opitutus terrae (strain DSM 11246 / JCM 15787 / PB90-1).